The sequence spans 180 residues: Small ribosomal subunit protein uS4 (180 aa).

The S4 RNA-binding domain maps to 104–166 (RRLQTIVHRK…PTSPFKNNPP (63 aa)). Residues 155–180 (FYPTSPFKNNPPTAGQGEVNVEQKGN) are disordered.

The protein belongs to the universal ribosomal protein uS4 family. Part of the 30S ribosomal subunit. Contacts protein S5. The interaction surface between S4 and S5 is involved in control of translational fidelity.

In terms of biological role, one of the primary rRNA binding proteins, it binds directly to 16S rRNA where it nucleates assembly of the body of the 30S subunit. Functionally, with S5 and S12 plays an important role in translational accuracy. In Metallosphaera sedula (strain ATCC 51363 / DSM 5348 / JCM 9185 / NBRC 15509 / TH2), this protein is Small ribosomal subunit protein uS4.